Here is a 317-residue protein sequence, read N- to C-terminus: MVNRPYANMNDLANAVAESVQKYLDNSGQARNGLFQKTNNGERDIETERLALQHQLFHLTLDGKLQLSPLPSPVQSVLDIATGDSTWVHAFAEQNPSAYIVANDPSPTSKIPLGLSVIPDASDANEPWTYTRQFDFVHCRQHHRRLDEPRLFKQAFSSLTPGGWLEMQELSNPVTSDDGTLSENNPLSQWGRLLIEASKKMNRPVDNPAKYETWMREAGFVNCHTVAYNWPTNPWPADEKGKTLGLWNLYNVLQRFEEFSVALLVKVLGWEMDDAKTFLGNVKEELMNEGVHGYWPVYVVYGQKPAAPGSDVITDSE.

Belongs to the methyltransferase superfamily. LaeA methyltransferase family.

Its pathway is secondary metabolite biosynthesis. In terms of biological role, probable methyltransferase; part of the gene cluster that mediates the biosynthesis of terrequinone A, an antitumor agent. The first step in the biosynthetic pathway for terrequinone A is formation of indole pyruvic acid (IPA) from L-tryptophan by the aminotransferase tdiD. The nonribosomal peptide synthase tdiA then immediately converts unstable IPA to didemethylasterriquinone D (DDAQ D), via condensation of 2 IPA molecules. The symmetric connectivity of the 2 IPA molecules is thought to arise by head-to-tail dual Claisen condensations facilitated by the TE domain. TdiB then catalyzes reverse prenylation by transferring dimethylallyl diphosphate to carbon atom 2' of DDAQ D, to yield asterriquinone C-1. Finally, tdiC and tdiE enzymes robustly convert asterriquinone C-1 to terrequinone A via a transformation involving regular prenylation at carbon atom 5, which requires elimination of the hydroxy group on C-5. This is Probable methyltransferase tdiE from Emericella nidulans (strain FGSC A4 / ATCC 38163 / CBS 112.46 / NRRL 194 / M139) (Aspergillus nidulans).